The following is a 194-amino-acid chain: dITP/XTP pyrophosphatase (194 aa).

Residue 8-13 (TSNPGK) participates in substrate binding. Residues glutamate 38 and aspartate 67 each coordinate Mg(2+). The active-site Proton acceptor is aspartate 67. Residues serine 68, 152 to 155 (FGYD), lysine 175, and 180 to 181 (HR) each bind substrate.

The protein belongs to the HAM1 NTPase family. In terms of assembly, homodimer. The cofactor is Mg(2+).

It carries out the reaction XTP + H2O = XMP + diphosphate + H(+). The enzyme catalyses dITP + H2O = dIMP + diphosphate + H(+). The catalysed reaction is ITP + H2O = IMP + diphosphate + H(+). In terms of biological role, pyrophosphatase that catalyzes the hydrolysis of nucleoside triphosphates to their monophosphate derivatives, with a high preference for the non-canonical purine nucleotides XTP (xanthosine triphosphate), dITP (deoxyinosine triphosphate) and ITP. Seems to function as a house-cleaning enzyme that removes non-canonical purine nucleotides from the nucleotide pool, thus preventing their incorporation into DNA/RNA and avoiding chromosomal lesions. The sequence is that of dITP/XTP pyrophosphatase from Legionella pneumophila (strain Paris).